The chain runs to 342 residues: S-adenosylmethionine:tRNA ribosyltransferase-isomerase (342 aa).

It belongs to the QueA family. Monomer.

The protein resides in the cytoplasm. The catalysed reaction is 7-aminomethyl-7-carbaguanosine(34) in tRNA + S-adenosyl-L-methionine = epoxyqueuosine(34) in tRNA + adenine + L-methionine + 2 H(+). The protein operates within tRNA modification; tRNA-queuosine biosynthesis. Functionally, transfers and isomerizes the ribose moiety from AdoMet to the 7-aminomethyl group of 7-deazaguanine (preQ1-tRNA) to give epoxyqueuosine (oQ-tRNA). This chain is S-adenosylmethionine:tRNA ribosyltransferase-isomerase, found in Streptococcus pyogenes serotype M2 (strain MGAS10270).